We begin with the raw amino-acid sequence, 376 residues long: Nuclear egress protein 1 (376 aa).

Position 19 is a phosphoserine (Ser19). A disordered region spans residues 22 to 57; it reads RKRRQRELASKVASTVNGATSANNHGEPPSPADARP. Residues 33-45 show a composition bias toward polar residues; sequence VASTVNGATSANN. The segment at 106–211 adopts a CCCH-type zinc-finger fold; it reads CLDISPYGNE…HVIFENSDVH (106 aa). The tract at residues 316–376 is disordered; that stretch reads VVSTNGCGPS…PLFLNSIRAP (61 aa). The segment covering 317 to 332 has biased composition (polar residues); that stretch reads VSTNGCGPSSSSQSTP.

It belongs to the herpesviridae NEC1 protein family. Forms a heterohexameric complex with NEC2. Interacts with capsid vertex specific component 2/CVC2; this interaction directs the capsid to the host inner nuclear membrane to initiate budding. In terms of processing, phosphorylated at serine residues in the N-terminus. This phosphorylation regulates the localization within the inner nuclear membrane. Phosphorylation by viral kinase UL97 at Ser-19 plays an important role for correct viral nuclear egress complex (NEC) localization.

It localises to the host nucleus inner membrane. Plays an essential role in virion nuclear egress, the first step of virion release from infected cell. Within the host nucleus, NEC1 interacts with the newly formed capsid through the vertexes and directs it to the inner nuclear membrane by associating with NEC2. Induces the budding of the capsid at the inner nuclear membrane as well as its envelopment into the perinuclear space. There, the NEC1/NEC2 complex promotes the fusion of the enveloped capsid with the outer nuclear membrane and the subsequent release of the viral capsid into the cytoplasm where it will reach the secondary budding sites in the host Golgi or trans-Golgi network. The polypeptide is Nuclear egress protein 1 (Homo sapiens (Human)).